Here is a 138-residue protein sequence, read N- to C-terminus: Regulator of ribonuclease activity B (138 aa).

Residues 114-138 (YFEDPNGEDGDDEDFVDEDDDGVRH) form a disordered region. Residues 118–138 (PNGEDGDDEDFVDEDDDGVRH) are compositionally biased toward acidic residues.

The protein belongs to the RraB family. Interacts with the C-terminal region of Rne.

The protein resides in the cytoplasm. Globally modulates RNA abundance by binding to RNase E (Rne) and regulating its endonucleolytic activity. Can modulate Rne action in a substrate-dependent manner by altering the composition of the degradosome. The chain is Regulator of ribonuclease activity B from Escherichia coli (strain K12).